Here is a 373-residue protein sequence, read N- to C-terminus: Anhydro-N-acetylmuramic acid kinase (373 aa).

12 to 19 contacts ATP; the sequence is GTSLDGVD.

It belongs to the anhydro-N-acetylmuramic acid kinase family.

It catalyses the reaction 1,6-anhydro-N-acetyl-beta-muramate + ATP + H2O = N-acetyl-D-muramate 6-phosphate + ADP + H(+). It functions in the pathway amino-sugar metabolism; 1,6-anhydro-N-acetylmuramate degradation. Its pathway is cell wall biogenesis; peptidoglycan recycling. Catalyzes the specific phosphorylation of 1,6-anhydro-N-acetylmuramic acid (anhMurNAc) with the simultaneous cleavage of the 1,6-anhydro ring, generating MurNAc-6-P. Is required for the utilization of anhMurNAc either imported from the medium or derived from its own cell wall murein, and thus plays a role in cell wall recycling. The sequence is that of Anhydro-N-acetylmuramic acid kinase from Serratia proteamaculans (strain 568).